The sequence spans 60 residues: Protein YmjC (60 aa).

The interval 40 to 60 is disordered; the sequence is HKPYPTNKMQTTSGKKVIQDR.

In Escherichia coli (strain K12), this protein is Protein YmjC (ymjC).